The primary structure comprises 317 residues: Ribosomal RNA small subunit methyltransferase H (317 aa).

Residues 39 to 41 (GGH), Asp59, Phe83, Asp104, and Gln111 each bind S-adenosyl-L-methionine.

It belongs to the methyltransferase superfamily. RsmH family.

It is found in the cytoplasm. It carries out the reaction cytidine(1402) in 16S rRNA + S-adenosyl-L-methionine = N(4)-methylcytidine(1402) in 16S rRNA + S-adenosyl-L-homocysteine + H(+). In terms of biological role, specifically methylates the N4 position of cytidine in position 1402 (C1402) of 16S rRNA. The chain is Ribosomal RNA small subunit methyltransferase H from Paraburkholderia phymatum (strain DSM 17167 / CIP 108236 / LMG 21445 / STM815) (Burkholderia phymatum).